The sequence spans 254 residues: MALLQWMLENISDDNSIKMSLEEQHETFQINVKWLKFLNLSDSDIVQLQNVYKLVQRDRERLIIYPDPQNVHSWSYLCSPEEIKVIIVGQDPYPDGRGHGLAFSTVRGCSPPNSLKTIFAELERTIENFKAPAHGSLKSWCAQGVLLLNTVFTVIRGVPMSHEAIGWQVLSNRIINQLSEKMQNLVFMLWGSQARKLVSLIDSKKHLILECAHPSPRTKGSKTPFIGCGHFLKANKYLQIHNKCPIDWNITNDL.

Asp-91 (proton acceptor) is an active-site residue.

The protein belongs to the uracil-DNA glycosylase (UDG) superfamily. UNG family.

The protein resides in the host nucleus. The catalysed reaction is Hydrolyzes single-stranded DNA or mismatched double-stranded DNA and polynucleotides, releasing free uracil.. In terms of biological role, excises uracil residues from the DNA which can arise as a result of misincorporation of dUMP residues by DNA polymerase or deamination of cytosines. Therefore may reduce deleterious uracil incorporation into the viral genome, particularly in terminally differentiated cells which lack DNA repair enzymes. This is Uracil-DNA glycosylase (U81) from Homo sapiens (Human).